A 97-amino-acid polypeptide reads, in one-letter code: NADH-ubiquinone oxidoreductase chain 4L (97 aa).

Transmembrane regions (helical) follow at residues 1 to 21 (MALL…ILLN), 23 to 43 (LHFL…FIGI), and 60 to 80 (LLLL…MVAL).

Belongs to the complex I subunit 4L family.

The protein resides in the mitochondrion membrane. The catalysed reaction is a ubiquinone + NADH + 5 H(+)(in) = a ubiquinol + NAD(+) + 4 H(+)(out). In terms of biological role, core subunit of the mitochondrial membrane respiratory chain NADH dehydrogenase (Complex I) that is believed to belong to the minimal assembly required for catalysis. Complex I functions in the transfer of electrons from NADH to the respiratory chain. The immediate electron acceptor for the enzyme is believed to be ubiquinone. The sequence is that of NADH-ubiquinone oxidoreductase chain 4L (ND4L) from Paracentrotus lividus (Common sea urchin).